A 245-amino-acid chain; its full sequence is Thiopurine S-methyltransferase (245 aa).

An S-adenosyl-L-methionine-binding site is contributed by 29–40; the sequence is WQEKWVSRRIGF. Phe-40 contributes to the substrate binding site. An N6-acetyllysine modification is found at Lys-58. 3 residues coordinate S-adenosyl-L-methionine: Leu-69, Glu-90, and Arg-152.

The protein belongs to the class I-like SAM-binding methyltransferase superfamily. TPMT family. Monomer.

The protein localises to the cytoplasm. It catalyses the reaction S-adenosyl-L-methionine + a thiopurine = S-adenosyl-L-homocysteine + a thiopurine S-methylether.. The sequence is that of Thiopurine S-methyltransferase (TPMT) from Canis lupus familiaris (Dog).